Reading from the N-terminus, the 912-residue chain is Translation initiation factor IF-2 (912 aa).

Positions 26–297 (SDQGEFVKSA…RGRKSKRAKR (272 aa)) are disordered. A compositionally biased stretch (low complexity) spans 56 to 74 (KPAPAASNGAAAEAAAPPK). Residues 100–120 (APEPPAAPAAPAAPAPKPSPA) are compositionally biased toward pro residues. A compositionally biased stretch (low complexity) spans 121-131 (ARPAAAEAAAP). Pro residues-rich tracts occupy residues 132–152 (APAPAPAPRPGATPGPKPGAP), 173–183 (PRPQAPRPGAP), and 192–218 (NMPPRPSPGSMGPRPPRPGGGPRPGGG). Over residues 219–283 (PRPGGAGRPG…GAAGAFGRPG (65 aa)) the composition is skewed to gly residues. A compositionally biased stretch (basic residues) spans 287 to 296 (KRGRKSKRAK). One can recognise a tr-type G domain in the interval 408–579 (TRPPVVTVMG…AVLLTADAAL (172 aa)). The interval 417–424 (GHVDHGKT) is G1. 417–424 (GHVDHGKT) serves as a coordination point for GTP. The G2 stretch occupies residues 442 to 446 (GITQH). The segment at 467 to 470 (DTPG) is G3. Residues 467–471 (DTPGH) and 521–524 (NKID) contribute to the GTP site. A G4 region spans residues 521–524 (NKID). The G5 stretch occupies residues 557-559 (SAR).

Belongs to the TRAFAC class translation factor GTPase superfamily. Classic translation factor GTPase family. IF-2 subfamily.

The protein resides in the cytoplasm. Functionally, one of the essential components for the initiation of protein synthesis. Protects formylmethionyl-tRNA from spontaneous hydrolysis and promotes its binding to the 30S ribosomal subunits. Also involved in the hydrolysis of GTP during the formation of the 70S ribosomal complex. The chain is Translation initiation factor IF-2 from Mycobacteroides abscessus (strain ATCC 19977 / DSM 44196 / CCUG 20993 / CIP 104536 / JCM 13569 / NCTC 13031 / TMC 1543 / L948) (Mycobacterium abscessus).